We begin with the raw amino-acid sequence, 296 residues long: Decaprenyl diphosphate synthase (296 aa).

The disordered stretch occupies residues 1-24; the sequence is MARDARKRTSSNFPQLPPAPDDYP. Asp-76 is a catalytic residue. A Mg(2+)-binding site is contributed by Asp-76. Substrate is bound by residues 76 to 80, Trp-81, Arg-89, His-93, 121 to 124, Trp-125, Arg-127, Arg-168, Arg-244, and 250 to 252; these read DGNGR, STEN, and RSS. Asn-124 serves as the catalytic Proton acceptor. Glu-263 serves as a coordination point for Mg(2+). 292-294 provides a ligand contact to substrate; the sequence is RFG.

It belongs to the UPP synthase family. As to quaternary structure, homodimer. Mg(2+) serves as cofactor. It depends on Mn(2+) as a cofactor.

Its subcellular location is the cell membrane. It catalyses the reaction (2Z,6E)-farnesyl diphosphate + 7 isopentenyl diphosphate = (2Z,6Z,10Z,14Z,18Z,22Z,26Z,30Z,34E)-decaprenyl diphosphate + 7 diphosphate. The catalysed reaction is n isopentenyl diphosphate + (2E,6E)-farnesyl diphosphate = a di-trans,poly-cis-polyprenyl diphosphate + n diphosphate. Its activity is regulated as follows. Activated by dithiothreitol and inhibited by EDTA. Functionally, catalyzes the sequential condensation of isopentenyl diphosphate (IPP) in the cis configuration with (2Z,6E)-farnesyl diphosphate (Z-FPP or EZ-FPP) generating the 50 carbon product trans,polycis-decaprenyl diphosphate. When (2E,6E)-farnesyl diphosphate (E-FPP or EE-FPP) is used in vitro, both primary products decaprenyl diphosphate and (2E,6E,10E)-geranylgeranyl diphosphate (EEE-GGPP) are synthesized. M.tuberculosis does not synthesize (2E,6E,10Z)-geranylgeranyl diphosphate (EEZ-GGPP) and heptaprenyl diphosphate. Can also accept many different allylic substrates, including E-geranyl diphosphate (E-GPP), neryl diphosphate (NPP), and all-trans-geranyl-geranyl diphosphate. The polypeptide is Decaprenyl diphosphate synthase (uppS) (Mycobacterium tuberculosis (strain ATCC 25618 / H37Rv)).